A 156-amino-acid chain; its full sequence is Rhombotin-1 (156 aa).

2 LIM zinc-binding domains span residues 22-84 and 86-148; these read KGCA…LFGT and GNCA…GHLN.

As to expression, expressed in the brain and not in the thymus.

Its subcellular location is the nucleus. In terms of biological role, may be involved in gene regulation within neural lineage cells potentially by direct DNA binding or by binding to other transcription factors. This is Rhombotin-1 (Lmo1) from Mus musculus (Mouse).